A 222-amino-acid polypeptide reads, in one-letter code: Latexin (222 aa).

The Cystatin LXN-type 1 domain maps to 1–97; that stretch reads MEIPPTNYPA…NFTFEGETGK (97 aa). Lys55 carries the post-translational modification N6-acetyllysine. Residues 98–117 form an alpha-helical linker region; sequence NPDEEDNTFYQRLKSMKEPL. The region spanning 118–222 is the Cystatin LXN-type 2 domain; it reads EAQNIPDNFG…SRLPKEVQLE (105 aa).

This sequence belongs to the protease inhibitor I47 (latexin) family. In terms of tissue distribution, highly expressed in heart, prostate, ovary, kidney, pancreas, and colon, moderate or low in other tissues including brain.

It localises to the cytoplasm. Its function is as follows. Hardly reversible, non-competitive, and potent inhibitor of CPA1, CPA2 and CPA4. May play a role in inflammation. The polypeptide is Latexin (LXN) (Homo sapiens (Human)).